A 1548-amino-acid polypeptide reads, in one-letter code: Zinc finger MYM-type protein 4 (1548 aa).

An N-acetylalanine modification is found at alanine 2. A Phosphothreonine modification is found at threonine 107. Phosphoserine is present on residues serine 110 and serine 122. Residues lysine 140 and lysine 149 each participate in a glycyl lysine isopeptide (Lys-Gly) (interchain with G-Cter in SUMO2) cross-link. The residue at position 162 (serine 162) is a Phosphoserine. Residues 162-189 form a disordered region; sequence SKETFSGKEKNRDLTYEREKRLDKPHKD. A Glycyl lysine isopeptide (Lys-Gly) (interchain with G-Cter in SUMO2) cross-link involves residue lysine 195. Serine 197 is subject to Phosphoserine. Glycyl lysine isopeptide (Lys-Gly) (interchain with G-Cter in SUMO2) cross-links involve residues lysine 201 and lysine 232. A Phosphoserine modification is found at serine 242. Lysine 250 participates in a covalent cross-link: Glycyl lysine isopeptide (Lys-Gly) (interchain with G-Cter in SUMO1); alternate. Residue lysine 250 forms a Glycyl lysine isopeptide (Lys-Gly) (interchain with G-Cter in SUMO2); alternate linkage. Glycyl lysine isopeptide (Lys-Gly) (interchain with G-Cter in SUMO2) cross-links involve residues lysine 260, lysine 271, lysine 273, lysine 289, lysine 327, lysine 400, lysine 428, and lysine 430. MYM-type zinc fingers lie at residues 362-402, 414-457, 464-499, 510-544, 554-592, 600-631, 708-742, 749-788, and 795-829; these read QLFC…PKDV, KDFC…RHEV, HKLCSDACFSKFRSANNLTMNCCENCGGYCYSGSGQ, KKFCSSSCITAYKQKSAKITPCALCKSLRSSAEMI, ELFCSVNCLSAYRVKMVTSAGVQVQCNSCKTSAIPQYHL, RNFCSYSCVVAFQNLFNKPTGMNSSVVPLSQG, FQFCGKNCSDEYKKINNVMAMCEYCKIEKIVKETV, KSFCSEGCKLLYKHDLAKRWGNHCKMCSYCLQTSPKLVQN, and EEFCCEECMSKYTVLFYQMAKCDACKRQGKLSESL. Phosphoserine is present on serine 1030. Glycyl lysine isopeptide (Lys-Gly) (interchain with G-Cter in SUMO2) cross-links involve residues lysine 1035 and lysine 1061. A phosphoserine mark is found at serine 1064 and serine 1071. Residues lysine 1080 and lysine 1127 each participate in a glycyl lysine isopeptide (Lys-Gly) (interchain with G-Cter in SUMO2) cross-link. Residues 1124–1134 are compositionally biased toward basic and acidic residues; it reads SELKQFSKGET. 2 disordered regions span residues 1124 to 1183 and 1231 to 1260; these read SELK…KSIV and KCGGVEQASSSPRSDPLGSTQDHALSQESS. The segment covering 1160 to 1181 has biased composition (basic residues); the sequence is SRTRRRHRDGFPQPRRRGRKKS. A phosphoserine mark is found at serine 1181 and serine 1256. The span at 1237–1260 shows a compositional bias: polar residues; it reads QASSSPRSDPLGSTQDHALSQESS. Residue lysine 1431 forms a Glycyl lysine isopeptide (Lys-Gly) (interchain with G-Cter in SUMO2) linkage. Phosphoserine is present on residues serine 1539, serine 1542, and serine 1547.

In terms of tissue distribution, expressed at higher level in heart, skeletal muscle, kidney and liver.

In terms of biological role, plays a role in the regulation of cell morphology and cytoskeletal organization. This chain is Zinc finger MYM-type protein 4 (ZMYM4), found in Homo sapiens (Human).